Consider the following 695-residue polypeptide: Lactotransferrin (695 aa).

Residues 1–6 (LGLCLA) form the signal peptide. 2 Transferrin-like domains span residues 12–339 (VRWC…NLRE) and 351–680 (VVWC…NLRR). 2 disulfide bridges follow: cysteine 15/cysteine 51 and cysteine 25/cysteine 42. Position 66 (aspartate 66) interacts with Fe(3+). Lysine 79 is a catalytic residue. Tyrosine 98 contributes to the Fe(3+) binding site. 5 disulfides stabilise this stretch: cysteine 121/cysteine 204, cysteine 163/cysteine 179, cysteine 166/cysteine 189, cysteine 176/cysteine 187, and cysteine 237/cysteine 251. 4 residues coordinate hydrogencarbonate: threonine 123, arginine 127, alanine 129, and glycine 130. N-linked (GlcNAc...) asparagine glycosylation occurs at asparagine 143. Tyrosine 198 is a Fe(3+) binding site. Residue histidine 259 coordinates Fe(3+). Serine 265 (nucleophile) is an active-site residue. An N-linked (GlcNAc...) asparagine glycan is attached at asparagine 287. Disulfide bonds link cysteine 354/cysteine 386 and cysteine 364/cysteine 377. A Fe(3+)-binding site is contributed by aspartate 401. Disulfide bonds link cysteine 411–cysteine 690, cysteine 431–cysteine 653, cysteine 463–cysteine 538, cysteine 487–cysteine 681, cysteine 497–cysteine 511, cysteine 508–cysteine 521, cysteine 579–cysteine 593, and cysteine 631–cysteine 636. D-glucose is bound at residue proline 436. Residue tyrosine 439 participates in Fe(3+) binding. Hydrogencarbonate contacts are provided by threonine 465, arginine 469, alanine 471, and alanine 472. A glycan (N-linked (GlcNAc...) asparagine) is linked at asparagine 482. Tyrosine 532 is a binding site for Fe(3+). Asparagine 600 is a binding site for D-glucose. Histidine 601 contacts Fe(3+). Tyrosine 666 serves as a coordination point for D-glucose.

This sequence belongs to the transferrin family. In terms of assembly, monomer. Found in a complex with LTF, CLU, EPPIN and SEMG1. Found in a complex with MPO and LTF; interacts directly with CP, allows Fe(3+) incorporation into LTF and activation of CP ferroxidase activity. Post-translationally, poly-N-acetyllactosaminic carbohydrate moiety seems to be needed for TLR4 activation.

The protein resides in the secreted. Its subcellular location is the cytoplasmic granule. Its function is as follows. Transferrins are iron binding transport proteins which can bind two Fe(3+) ions in association with the binding of an anion, usually bicarbonate. In terms of biological role, major iron-binding and multifunctional protein found in exocrine fluids such as breast milk and mucosal secretions. Has antimicrobial activity, which depends on the extracellular cation concentration. Antimicrobial properties include bacteriostasis, which is related to its ability to sequester free iron and thus inhibit microbial growth, as well as direct bactericidal properties leading to the release of lipopolysaccharides from the bacterial outer membrane. Can also prevent bacterial biofilm development in P.aeruginosa infection. Has weak antifungal activity against C.albicans. Has anabolic, differentiating and anti-apoptotic effects on osteoblasts and can also inhibit osteoclastogenesis, possibly playing a role in the regulation of bone growth. Promotes binding of species C adenoviruses to epithelial cells, promoting adenovirus infection. Can inhibit papillomavirus infections. Stimulates the TLR4 signaling pathway leading to NF-kappa-B activation and subsequent pro-inflammatory cytokine production while also interfering with the lipopolysaccharide (LPS)-stimulated TLR4 signaling. Inhibits neutrophil granulocyte migration to sites of apoptosis, when secreted by apoptotic cells. Stimulates VEGFA-mediated endothelial cell migration and proliferation. Binds heparin, chondroitin sulfate and possibly other glycosaminoglycans (GAGs). Also binds specifically to pneumococcal surface protein A (PspA), the lipid A portion of bacterial lipopolysaccharide (LPS), lysozyme and DNA. Lactoferricin binds to the bacterial surface and is crucial for the bactericidal functions. Has some antiviral activity against papillomavirus infection. N-terminal region shows strong antifungal activity against C.albicans. Contains two BBXB heparin-binding consensus sequences that appear to form the predominate functional GAG-binding site. Functionally, the lactotransferrin transferrin-like domain 1 functions as a serine protease of the peptidase S60 family that cuts arginine rich regions. This function contributes to the antimicrobial activity. Shows a preferential cleavage at -Arg-Ser-Arg-Arg-|- and -Arg-Arg-Ser-Arg-|-, and of Z-Phe-Arg-|-aminomethylcoumarin sites. The polypeptide is Lactotransferrin (LTF) (Equus caballus (Horse)).